A 208-amino-acid polypeptide reads, in one-letter code: Small ribosomal subunit protein uS4 (208 aa).

Positions 98-160 (QRLDNVVYRM…SKNNSQIVRA (63 aa)) constitute an S4 RNA-binding domain.

The protein belongs to the universal ribosomal protein uS4 family. Part of the 30S ribosomal subunit. Contacts protein S5. The interaction surface between S4 and S5 is involved in control of translational fidelity.

One of the primary rRNA binding proteins, it binds directly to 16S rRNA where it nucleates assembly of the body of the 30S subunit. Its function is as follows. With S5 and S12 plays an important role in translational accuracy. The chain is Small ribosomal subunit protein uS4 from Sulfurimonas denitrificans (strain ATCC 33889 / DSM 1251) (Thiomicrospira denitrificans (strain ATCC 33889 / DSM 1251)).